Consider the following 165-residue polypeptide: Endoribonuclease YbeY (165 aa).

3 residues coordinate Zn(2+): His-130, His-134, and His-140.

Belongs to the endoribonuclease YbeY family. Zn(2+) serves as cofactor.

Its subcellular location is the cytoplasm. Its function is as follows. Single strand-specific metallo-endoribonuclease involved in late-stage 70S ribosome quality control and in maturation of the 3' terminus of the 16S rRNA. In Streptococcus sanguinis (strain SK36), this protein is Endoribonuclease YbeY.